A 689-amino-acid chain; its full sequence is Dipeptidyl aminopeptidase BIII (689 aa).

Positions 1–26 (MRHPAFRLTLLASTVAFALAPQAAQA) are cleaved as a signal peptide. Residues serine 506, aspartate 593, and histidine 625 each act as charge relay system in the active site.

This sequence belongs to the peptidase S9C family. As to quaternary structure, monomer.

Its activity is regulated as follows. Strongly inhibited by the serine protease inhibitor diisopropyl fluorophosphate (DFP), chymostatin, leupeptin, 0.5 mM ZnCl(2), 10 mM o-phenanthlorine and N-tosyl-L-phenyl-alanyl chloromethyl ketone (TPCK), but not by N-tosyl-L-lysyl chloromethyl ketone (TLCK). Activity is not affected significantly by iodoacetate (IAA), L-trans-epoxysuccinyl-leucylamido(4-guanido)butane (E64), pepstatin A and phenylmethanesulfonyl fluoride (PMSF). Activity is stimulated by addition of 0.5 mM CaCl(2), 10 mM EDTA and N-ethylmaleimide (NEM). Functionally, exopeptidase that catalyzes the removal of dipeptide units (NH2-P2-P1- or -P1'-P2'-COOH) from the free amino or carboxy termini. Prefers substrates composed of bulky, hydrophobic amino acids at P1 and P1' positions. Has endopeptidase activity on N-terminally blocked peptide derivatives which contain aromatic amino acid residue at the P1 position. Exopeptidase activity is much higher than its endopeptidase activity. The protein is Dipeptidyl aminopeptidase BIII of Pseudoxanthomonas mexicana.